We begin with the raw amino-acid sequence, 127 residues long: SH2 domain-containing protein 1A (127 aa).

Residues 6-102 (VYHGKISRET…GIVIPLQYPV (97 aa)) form the SH2 domain. The interaction with FYN SH3 domain stretch occupies residues 67–92 (ETAPGVHKRYFRKIKNLISAFQKPDQ). Position 89 is an N6-acetyllysine (Lys-89). Residues 104-127 (KSSPRSTQGTTGIREDPDVCLKAP) are disordered. Over residues 116 to 127 (IREDPDVCLKAP) the composition is skewed to basic and acidic residues.

As to quaternary structure, interacts with CD84, CD244, LY9, SLAMF1 and FYN. Interacts with NTRK1, NTRK2 and NTRK3.

The protein resides in the cytoplasm. Functionally, cytoplasmic adapter regulating receptors of the signaling lymphocytic activation molecule (SLAM) family such as SLAMF1, CD244, LY9, CD84, SLAMF6 and SLAMF7. In SLAM signaling seems to cooperate with SH2D1B/EAT-2. Initially it has been proposed that association with SLAMF1 prevents SLAMF1 binding to inhibitory effectors including INPP5D/SHIP1 and PTPN11/SHP-2. However, by simultaneous interactions, recruits FYN which subsequently phosphorylates and activates SLAMF1. Positively regulates CD244/2B4- and CD84-mediated natural killer (NK) cell functions. Can also promote CD48-, SLAMF6 -, LY9-, and SLAMF7-mediated NK cell activation. In the context of NK cell-mediated cytotoxicity enhances conjugate formation with target cells. May also regulate the activity of the neurotrophin receptors NTRK1, NTRK2 and NTRK3. The chain is SH2 domain-containing protein 1A (SH2D1A) from Saguinus oedipus (Cotton-top tamarin).